Consider the following 543-residue polypeptide: Protein B602L (543 aa).

13 consecutive repeat copies span residues 161-164, 165-168, 169-172, 173-176, 177-180, 181-184, 185-188, 189-192, 193-196, 197-200, 201-204, 205-208, and 209-212. Residues 161–212 are 13 X 4 AA tandem repeats of [CN]-[ATV]-[DS]-T; that stretch reads CASTCASTCASTCASTCADTNVDTCTDTCASTCADTNVDTCASTCADTCAST.

Belongs to the asfivirus B602L family.

It localises to the host cytoplasm. Functionally, plays an essential role in the assembly of the icosahedral capsid of the virus. Allows the assembly of 3 molecules of hexon protein p72 and formation of a thermostable trimer. This African swine fever virus (isolate Pig/Kenya/KEN-50/1950) (ASFV) protein is Protein B602L.